The sequence spans 186 residues: Large ribosomal subunit protein uL5 (186 aa).

Belongs to the universal ribosomal protein uL5 family. Part of the 50S ribosomal subunit; part of the 5S rRNA/L5/L18/L25 subcomplex. Contacts the 5S rRNA and the P site tRNA. Forms a bridge to the 30S subunit in the 70S ribosome.

Its function is as follows. This is one of the proteins that bind and probably mediate the attachment of the 5S RNA into the large ribosomal subunit, where it forms part of the central protuberance. In the 70S ribosome it contacts protein S13 of the 30S subunit (bridge B1b), connecting the 2 subunits; this bridge is implicated in subunit movement. Contacts the P site tRNA; the 5S rRNA and some of its associated proteins might help stabilize positioning of ribosome-bound tRNAs. This is Large ribosomal subunit protein uL5 from Karelsulcia muelleri (strain GWSS) (Sulcia muelleri).